We begin with the raw amino-acid sequence, 1645 residues long: Histone-lysine N-methyltransferase set-26 (1645 aa).

Disordered stretches follow at residues 1–82 (MADG…QQIP), 109–132 (EPAAAADSRPLTEEEQLAAERPTE), 200–228 (DAVGPGSPGTQYRRNQQTGGGLPSTSVAP), 417–606 (TPEQ…VLRP), and 651–789 (TGQS…DEAA). Low complexity-rich tracts occupy residues 16–31 (EQPPLQQQQPEIAEPI) and 67–82 (QEFYQEPQIPEPQQIP). The span at 207–228 (PGTQYRRNQQTGGGLPSTSVAP) shows a compositional bias: polar residues. Low complexity-rich tracts occupy residues 429–443 (RQRAAPQFPAAAAQR) and 453–467 (RPGASSSRAPRPSMA). The segment covering 559 to 578 (MTQEEKNAHFARLTTDKEKP) has biased composition (basic and acidic residues). Pro residues predominate over residues 592 to 603 (PHVPPPPPPPLV). Positions 651-675 (TGQSGSSAAARQRTVSGSAARAQTY) are enriched in polar residues. Basic residues-rich tracts occupy residues 684–699 (QHHHQMPMDQRKRHSS) and 731–741 (HRPRGRPKGTR). The span at 780 to 789 (SESEGIDEAA) shows a compositional bias: acidic residues. The segment at 794–842 (TMRCHCGMDHGDGDTIECEGCKTWQHMACMGLTLKSNTSKYKCEMCLPR) adopts a PHD-type zinc-finger fold. The interval 865–904 (AAKKQKRKSEPVEQKQKSQPSTSRKSAPMALQQQPAEPRV) is disordered. Polar residues predominate over residues 881–899 (KSQPSTSRKSAPMALQQQP). An SET domain is found at 973 to 1064 (MSNEVKRQPG…RNTEVTLPFD (92 aa)). Residues 1099–1172 (RHRAMDHKKR…EAKERKKMEV (74 aa)) are compositionally biased toward basic and acidic residues. 3 disordered regions span residues 1099-1333 (RHRA…SKNV), 1371-1536 (SGLL…STEG), and 1548-1645 (PLDD…TRWN). Positions 1103-1217 (MDHKKREAEE…GKRKEARRRS (115 aa)) form a coiled coil. Low complexity predominate over residues 1173–1183 (EASAAAAPESS). The span at 1188 to 1210 (AREERRIQQAEEMFRRQEEEGKR) shows a compositional bias: basic and acidic residues. 2 stretches are compositionally biased toward polar residues: residues 1258–1268 (TTQPSTSSFAT) and 1300–1311 (TVATPKDTTASN). 3 stretches are compositionally biased toward basic and acidic residues: residues 1382-1427 (SEVR…KKAN), 1434-1450 (KSEKAVEKAVEKVEKKP), and 1468-1485 (KKTEEVDGIEREASESSS). Residues 1554 to 1565 (SSSNTAPTTTIA) show a composition bias toward polar residues.

Belongs to the class V-like SAM-binding methyltransferase superfamily. In terms of tissue distribution, expressed both in the germline and in somatic tissues.

Its subcellular location is the nucleus. The enzyme catalyses L-lysyl(9)-[histone H3] + 3 S-adenosyl-L-methionine = N(6),N(6),N(6)-trimethyl-L-lysyl(9)-[histone H3] + 3 S-adenosyl-L-homocysteine + 3 H(+). Histone methyltransferase that mediates trimethylation of 'Lys-9' of histone H3 in vitro. Involved in transcriptional regulation. Plays a role in the negative regulation of lifespan and in heat resistance. Together with set-9, negatively regulates lifespan in a germline-independent, partially daf-16-dependent fashion. Together with set-9, plays a role in germline development and maintenance and might play a role in the restriction of the trimethylation mark on histone H3 'Lys-4'(H3K4me3) to target genes specifically in the germline. Together with spr-5, required for transgenerational fertility. This Caenorhabditis elegans protein is Histone-lysine N-methyltransferase set-26.